Here is an 801-residue protein sequence, read N- to C-terminus: Glycerol-3-phosphate acyltransferase 2, mitochondrial (801 aa).

The segment at 1-24 (MDTMLKSNPQTQQRSNHNGQETSL) is disordered. Topologically, residues 1-305 (MDTMLKSNPQ…PGPRLSALGQ (305 aa)) are cytoplasmic. The tract at residues 180 to 290 (QLHKGQMKMV…SGQPLLIFLE (111 aa)) is acyltransferase. The HXXXXD motif signature appears at 205-210 (HKSLLD). A helical transmembrane segment spans residues 306–332 (AWLGVVIQAVQAGIISDATLVPVAIAY). The Mitochondrial intermembrane segment spans residues 333–449 (DLVPDAPCNM…QLLVRRLSRH (117 aa)). Residues 450 to 472 (VLSASVASSAVMSTAIMATLLLL) traverse the membrane as a helical segment. Over 473–801 (KHQKGVVLSQ…EQFIRQFICS (329 aa)) the chain is Cytoplasmic. At S662 the chain carries Phosphoserine. Phosphothreonine is present on T666. A phosphoserine mark is found at S668 and S670.

The protein belongs to the GPAT/DAPAT family. As to quaternary structure, interacts with PIWIL2. Highly expressed in the testis. Expressed at lower levels in the heart, liver, kidney, spleen and adipose cells. Only detected in primary spermatocytes.

The protein resides in the mitochondrion outer membrane. The enzyme catalyses sn-glycerol 3-phosphate + an acyl-CoA = a 1-acyl-sn-glycero-3-phosphate + CoA. It catalyses the reaction a 1-acyl-sn-glycero-3-phosphate + an acyl-CoA = a 1,2-diacyl-sn-glycero-3-phosphate + CoA. The catalysed reaction is 1-(9Z-octadecenoyl)-sn-glycero-3-phosphate + (9Z)-octadecenoyl-CoA = 1,2-di-(9Z-octadecenoyl)-sn-glycero-3-phosphate + CoA. It carries out the reaction 1-(9Z-octadecenoyl)-sn-glycero-3-phosphate + (5Z,8Z,11Z,14Z)-eicosatetraenoyl-CoA = 1-(9Z)-octadecenoyl-2-(5Z,8Z,11Z,14Z)-eicosatetraenoyl-sn-glycero-3-phosphate + CoA. The enzyme catalyses (5Z,8Z,11Z,14Z)-eicosatetraenoyl-CoA + sn-glycerol 3-phosphate = 1-(5Z,8Z,11Z,14Z-eicosatetraenoyl)-sn-glycero-3-phosphate + CoA. It participates in phospholipid metabolism; CDP-diacylglycerol biosynthesis; CDP-diacylglycerol from sn-glycerol 3-phosphate: step 1/3. With respect to regulation, inhibited by N-ethylmaleimide (NEM). Functionally, transfers an acyl-group from acyl-ACP to the sn-1 position of glycerol-3-phosphate producing a lysophosphatidic acid (LPA), an essential step for the triacylglycerol (TAG) and glycerophospholipids. In vitro also transfers an acyl-group from acyl-ACP to the LPA producing a phosphatidic acid (PA). Prefers arachidonoyl-CoA as the acyl donor. Required for primary processing step during piRNA biosynthesis. Molecular mechanisms by which it promotes piRNA biosynthesis are unclear and do not involve its acyltransferase activity. This chain is Glycerol-3-phosphate acyltransferase 2, mitochondrial, found in Mus musculus (Mouse).